Here is a 442-residue protein sequence, read N- to C-terminus: Glutamate-1-semialdehyde 2,1-aminomutase (442 aa).

The residue at position 282 (lysine 282) is an N6-(pyridoxal phosphate)lysine.

The protein belongs to the class-III pyridoxal-phosphate-dependent aminotransferase family. HemL subfamily. As to quaternary structure, homodimer. Pyridoxal 5'-phosphate is required as a cofactor.

It localises to the cytoplasm. The enzyme catalyses (S)-4-amino-5-oxopentanoate = 5-aminolevulinate. It participates in porphyrin-containing compound metabolism; protoporphyrin-IX biosynthesis; 5-aminolevulinate from L-glutamyl-tRNA(Glu): step 2/2. The sequence is that of Glutamate-1-semialdehyde 2,1-aminomutase from Polaromonas sp. (strain JS666 / ATCC BAA-500).